The following is a 340-amino-acid chain: Phosphoribosylformylglycinamidine cyclo-ligase (340 aa).

It belongs to the AIR synthase family.

It localises to the cytoplasm. It carries out the reaction 2-formamido-N(1)-(5-O-phospho-beta-D-ribosyl)acetamidine + ATP = 5-amino-1-(5-phospho-beta-D-ribosyl)imidazole + ADP + phosphate + H(+). The protein operates within purine metabolism; IMP biosynthesis via de novo pathway; 5-amino-1-(5-phospho-D-ribosyl)imidazole from N(2)-formyl-N(1)-(5-phospho-D-ribosyl)glycinamide: step 2/2. The chain is Phosphoribosylformylglycinamidine cyclo-ligase from Streptococcus pyogenes serotype M2 (strain MGAS10270).